The chain runs to 592 residues: Aspartate--tRNA(Asp/Asn) ligase (592 aa).

Glu-173 is an L-aspartate binding site. Residues 197-200 (QLFK) form an aspartate region. Arg-219 is a binding site for L-aspartate. ATP-binding positions include 219-221 (RDE) and Gln-228. Residue His-448 coordinates L-aspartate. Glu-481 lines the ATP pocket. Arg-488 contacts L-aspartate. 533 to 536 (GLDR) is a binding site for ATP.

The protein belongs to the class-II aminoacyl-tRNA synthetase family. Type 1 subfamily. As to quaternary structure, homodimer.

It localises to the cytoplasm. The enzyme catalyses tRNA(Asx) + L-aspartate + ATP = L-aspartyl-tRNA(Asx) + AMP + diphosphate. Functionally, aspartyl-tRNA synthetase with relaxed tRNA specificity since it is able to aspartylate not only its cognate tRNA(Asp) but also tRNA(Asn). Reaction proceeds in two steps: L-aspartate is first activated by ATP to form Asp-AMP and then transferred to the acceptor end of tRNA(Asp/Asn). In Chromohalobacter salexigens (strain ATCC BAA-138 / DSM 3043 / CIP 106854 / NCIMB 13768 / 1H11), this protein is Aspartate--tRNA(Asp/Asn) ligase.